Consider the following 295-residue polypeptide: MNSQLANAPNAFNYIESHRDEYQLSHDLTEILLQFPSTAAQFTARLNRSCMKIDHCVIEYRQQVPINATGSVIVEIHDKRMTDDESLQASWTFPLRCNIDLHYFSSSFFSLKDPIPWKLYYRVSDTNVHQRTHFAKFKGKLKLSTAKHSVDIPFRAPTVKIHSKQFSHRDVDFSHVDYGRWERKTLRSKSLSRIGLTGPGPIELQPGDSWASRSTIGFPNPHTESEVENALHPYRELNLLGTSALDPGDSASQAGLQRAQSTITMSVAQLSELVRTTVQECINNNCNPPQPKSLQ.

The protein belongs to the begomovirus movement protein BC1 family. Binds to dimeric supercoiled plasmid DNA. Phosphorylated.

The protein resides in the host cell membrane. Its subcellular location is the host microsome membrane. It localises to the host endoplasmic reticulum membrane. In terms of biological role, transports viral genome to neighboring plant cells directly through plasmosdesmata, without any budding. The movement protein allows efficient cell to cell propagation, by bypassing the host cell wall barrier. Begomovirus genome is shuttled out of nucleus by Nuclear shuttle protein (NSP) and the movement protein transports the DNA-NSP complex to cell plasmodesmata and facilitates further movement across the cell wall. This is Movement protein BC1 from Brassica oleracea (Wild cabbage).